The sequence spans 267 residues: NAD(P)H-hydrate epimerase (267 aa).

Residues 27–242 (AQKIDEDLMS…DLEAKFDLQL (216 aa)) enclose the YjeF N-terminal domain. Position 78 to 82 (78 to 82 (NQGGD)) interacts with (6S)-NADPHX. Residues glutamine 79 and aspartate 142 each contribute to the K(+) site. (6S)-NADPHX contacts are provided by residues 146 to 152 (GFNFKGD) and aspartate 185. A K(+)-binding site is contributed by serine 188.

The protein belongs to the NnrE/AIBP family. K(+) is required as a cofactor.

The protein localises to the cytoplasm. It localises to the mitochondrion. It carries out the reaction (6R)-NADHX = (6S)-NADHX. The catalysed reaction is (6R)-NADPHX = (6S)-NADPHX. Its function is as follows. Catalyzes the epimerization of the S- and R-forms of NAD(P)HX, a damaged form of NAD(P)H that is a result of enzymatic or heat-dependent hydration. This is a prerequisite for the S-specific NAD(P)H-hydrate dehydratase to allow the repair of both epimers of NAD(P)HX. This Mycosarcoma maydis (Corn smut fungus) protein is NAD(P)H-hydrate epimerase.